The chain runs to 297 residues: HTH-type transcriptional regulator ArgP (297 aa).

The 57-residue stretch at proline 4–threonine 60 folds into the HTH lysR-type domain. Positions phenylalanine 21–lysine 40 form a DNA-binding region, H-T-H motif.

This sequence belongs to the LysR transcriptional regulatory family. Homodimer.

Functionally, controls the transcription of genes involved in arginine and lysine metabolism. This is HTH-type transcriptional regulator ArgP from Escherichia coli O7:K1 (strain IAI39 / ExPEC).